Reading from the N-terminus, the 541-residue chain is GPI alpha-1,2-mannosyltransferase 3 (541 aa).

Asn-18 is a glycosylation site (N-linked (GlcNAc...) asparagine). 9 helical membrane-spanning segments follow: residues Leu-53 to Val-73, Val-126 to Leu-146, Leu-182 to Gly-202, Leu-214 to Phe-234, Asp-245 to Ile-265, Gly-305 to Pro-325, Ile-330 to Phe-350, Phe-352 to Lys-372, and Pro-377 to His-397. Asn-417 carries an N-linked (GlcNAc...) asparagine glycan.

Belongs to the glycosyltransferase 22 family. PIGB subfamily.

It localises to the endoplasmic reticulum membrane. Its pathway is glycolipid biosynthesis; glycosylphosphatidylinositol-anchor biosynthesis. Its function is as follows. Alpha-1,2-mannosyltransferase that catalyzes the transfer of the third mannose, via an alpha-1,2 bond, from a dolichol-phosphate-mannose (Dol-P-Man) to an alpha-D-Man-(1-&gt;6)-2-PEtn-alpha-D-Man-(1-&gt;4)-alpha-D-GlcN-(1-&gt;6)-(1-radyl,2-acyl-sn-glycero-3-phospho)-2-acyl-inositol intermediate to generate an alpha-D-Man-(1-&gt;2)-alpha-D-Man-(1-&gt;6)-2-PEtn-alpha-D-Man-(1-&gt;4)-alpha-D-GlcN-(1-&gt;6)-(1-radyl,2-acyl-sn-glycero-3-phospho)-2-acyl-inositol (also termed H6) and participates in the nineth step of the glycosylphosphatidylinositol-anchor biosynthesis. May also add the third mannose to an alpha-D-Man-(1-&gt;6)-alpha-D-Man-(1-&gt;4)-alpha-D-GlcN-(1-&gt;6)-(1-radyl,2-acyl-sn-glycero-3-phospho)-2-acyl-inositol (also termed H3) intermediate generating an alpha-D-Man-(1-&gt;2)-alpha-D-Man-(1-&gt;6)-alpha-D-Man-(1-&gt;4)-alpha-D-GlcN-(1-&gt;6)-(1-radyl,2-acyl-sn-glycero-3-phospho)-2-acyl-inositol (also termed H4). The polypeptide is GPI alpha-1,2-mannosyltransferase 3 (Bos taurus (Bovine)).